The chain runs to 553 residues: Protein YloV (553 aa).

Positions 9-201 (RTFAEMILAG…LLCVYEGFLA (193 aa)) constitute a DhaL domain.

In Bacillus subtilis (strain 168), this protein is Protein YloV (yloV).